Here is a 309-residue protein sequence, read N- to C-terminus: HPr kinase/phosphorylase (309 aa).

Catalysis depends on residues His138 and Lys159. Residue 153–160 (GKSGVGKS) coordinates ATP. Ser160 is a binding site for Mg(2+). Asp177 functions as the Proton acceptor; for phosphorylation activity. Proton donor; for dephosphorylation activity in the catalytic mechanism. The important for the catalytic mechanism of both phosphorylation and dephosphorylation stretch occupies residues 201-210 (LEIRGLGIIN). Glu202 contacts Mg(2+). Arg243 is an active-site residue. The interval 264 to 269 (PVRPGR) is important for the catalytic mechanism of dephosphorylation.

This sequence belongs to the HPrK/P family. As to quaternary structure, homohexamer. Mg(2+) is required as a cofactor.

It carries out the reaction [HPr protein]-L-serine + ATP = [HPr protein]-O-phospho-L-serine + ADP + H(+). It catalyses the reaction [HPr protein]-O-phospho-L-serine + phosphate + H(+) = [HPr protein]-L-serine + diphosphate. Its function is as follows. Catalyzes the ATP- as well as the pyrophosphate-dependent phosphorylation of a specific serine residue in HPr, a phosphocarrier protein of the phosphoenolpyruvate-dependent sugar phosphotransferase system (PTS). HprK/P also catalyzes the pyrophosphate-producing, inorganic phosphate-dependent dephosphorylation (phosphorolysis) of seryl-phosphorylated HPr (P-Ser-HPr). The two antagonistic activities of HprK/P are regulated by several intracellular metabolites, which change their concentration in response to the absence or presence of rapidly metabolisable carbon sources (glucose, fructose, etc.) in the growth medium. Also phosphorylates/dephosphorylates the HPr-like catabolite repression protein crh on a specific serine residue. Therefore, by controlling the phosphorylation state of HPr and crh, HPrK/P is a sensor enzyme that plays a major role in the regulation of carbon metabolism and sugar transport: it mediates carbon catabolite repression (CCR), and regulates PTS-catalyzed carbohydrate uptake and inducer exclusion. This is HPr kinase/phosphorylase from Geobacillus thermodenitrificans (strain NG80-2).